A 561-amino-acid polypeptide reads, in one-letter code: Putative transport protein YbjL (561 aa).

5 consecutive transmembrane segments (helical) span residues 8–28, 32–52, 66–86, 94–114, and 158–178; these read LLNG…LCLG, LGSV…LLGQ, FMLF…SIFF, MLAL…GKLF, and NLSL…IVGA. 2 consecutive RCK C-terminal domains span residues 200–288 and 292–373; these read RGLD…SFRN and VFDR…RIGF. Helical transmembrane passes span 383-403, 406-426, 447-467, 475-495, and 537-557; these read LLAF…TFQF, FSFG…LGFL, FGLM…INNG, MLIA…LFGA, and GTYA…VIIW.

It belongs to the AAE transporter (TC 2.A.81) family. YbjL subfamily.

It is found in the cell membrane. This chain is Putative transport protein YbjL, found in Salmonella choleraesuis (strain SC-B67).